A 199-amino-acid chain; its full sequence is Recombination protein RecR (199 aa).

Residues 57 to 72 (CSVCGNITEDDPCPIC) form a C4-type zinc finger. One can recognise a Toprim domain in the interval 80–176 (SRVLVVERSR…KVTRLAHGLS (97 aa)).

The protein belongs to the RecR family.

In terms of biological role, may play a role in DNA repair. It seems to be involved in an RecBC-independent recombinational process of DNA repair. It may act with RecF and RecO. The chain is Recombination protein RecR from Limosilactobacillus fermentum (strain NBRC 3956 / LMG 18251) (Lactobacillus fermentum).